The primary structure comprises 288 residues: MNTIGLVVNSSKGDVAKPVREVISWLAEQRIKVLYNEESAVLLGCPEEGISTRELGAQCDCIMVWGGDGTLLNCARQTASSGTPIFGVNLGRLGFLTEIDIPDLRERLQALIAGHFYIEERMMLEATVIRGGQVVDQAVCLNDAVVSKGASFRMVQLRILVNNEFVGSFAADGVIVASPTGSTAYSLAAGGPIISPDMEAMLITPICPHSLSNRPIVISPQSKVEVQVLPYVDKVGLNLDGQYGLPLREGDRILINRATVKARFLKIQKTGFYDVLREKLKEWQNGLD.

The active-site Proton acceptor is the D68. Residues 68 to 69 (DG), 142 to 143 (ND), R153, D172, and Q242 contribute to the NAD(+) site.

This sequence belongs to the NAD kinase family. It depends on a divalent metal cation as a cofactor.

It localises to the cytoplasm. It catalyses the reaction NAD(+) + ATP = ADP + NADP(+) + H(+). Involved in the regulation of the intracellular balance of NAD and NADP, and is a key enzyme in the biosynthesis of NADP. Catalyzes specifically the phosphorylation on 2'-hydroxyl of the adenosine moiety of NAD to yield NADP. This Desulforamulus reducens (strain ATCC BAA-1160 / DSM 100696 / MI-1) (Desulfotomaculum reducens) protein is NAD kinase.